Reading from the N-terminus, the 289-residue chain is Iodotyrosine deiodinase 1 (289 aa).

The helical transmembrane segment at methionine 1–lysine 21 threads the bilayer. Positions lysine 29–glutamate 58 are enriched in basic and acidic residues. The interval lysine 29–glutamate 69 is disordered. The segment covering glutamate 59–glutamate 69 has biased composition (acidic residues). Residues arginine 100–arginine 104, serine 128, and serine 128–glycine 129 contribute to the FMN site. 4 residues coordinate 3-iodo-L-tyrosine: alanine 130, glutamate 157, tyrosine 161, and lysine 182. FMN-binding positions include threonine 237–threonine 239 and arginine 279.

It belongs to the nitroreductase family. As to quaternary structure, homodimer. The cofactor is FMN. Expressed at a high level in thyroid gland (at protein level). Expressed at a high level in thyroid gland and at lower level in kidney and trachea.

It is found in the cell membrane. The protein resides in the cytoplasmic vesicle membrane. The catalysed reaction is 2 iodide + L-tyrosine + 2 NADP(+) = 3,5-diiodo-L-tyrosine + 2 NADPH + H(+). The enzyme catalyses iodide + L-tyrosine + NADP(+) = 3-iodo-L-tyrosine + NADPH. It carries out the reaction 3-iodo-L-tyrosine + iodide + NADP(+) = 3,5-diiodo-L-tyrosine + NADPH + H(+). It catalyses the reaction L-tyrosine + chloride + NADP(+) = 3-chloro-L-tyrosine + NADPH. The catalysed reaction is bromide + L-tyrosine + NADP(+) = 3-bromo-L-tyrosine + NADPH. Catalyzes the dehalogenation of halotyrosines such as 3-bromo-L-tyrosine, 3-chloro-L-tyrosine, 3-iodo-L-tyrosine and 3,5-diiodo-L-tyrosine. During thyroid hormone biosynthesis, facilitates iodide salvage by catalysing the oxidative NADPH-dependent deiodination of the halogenated by-products of thyroid hormone production, monoiodotyrosine (L-MIT) and diiodotyrosine (L-DIT). The scavanged iodide can then reenter the hormone-producing pathways. Acts more efficiently on 3-iodo-L-tyrosine than 3,5-diiodo-L-tyrosine. The polypeptide is Iodotyrosine deiodinase 1 (Homo sapiens (Human)).